We begin with the raw amino-acid sequence, 215 residues long: Adenylate kinase (215 aa).

10-15 (GAGKGT) is a binding site for ATP. Positions 30 to 59 (STGDMLRAAVKAETELGLKAKSVMDSGGLV) are NMP. AMP contacts are provided by residues T31, R36, 57-59 (GLV), 85-88 (GFPR), and Q92. Residues 122–159 (GRRVHEGSGRIYHTIFNPPKVEGIDDVTGEPLLQRKDD) form an LID region. Residues R123 and 132–133 (IY) each bind ATP. AMP is bound by residues R156 and R167. Residue G201 participates in ATP binding.

This sequence belongs to the adenylate kinase family. Monomer.

It is found in the cytoplasm. The catalysed reaction is AMP + ATP = 2 ADP. The protein operates within purine metabolism; AMP biosynthesis via salvage pathway; AMP from ADP: step 1/1. Its function is as follows. Catalyzes the reversible transfer of the terminal phosphate group between ATP and AMP. Plays an important role in cellular energy homeostasis and in adenine nucleotide metabolism. This chain is Adenylate kinase, found in Pseudomonas syringae pv. syringae (strain B728a).